The following is a 397-amino-acid chain: Ubiquitin-like modifier-activating enzyme 5 (397 aa).

Glycine 77, aspartate 98, lysine 121, asparagine 144, and asparagine 178 together coordinate ATP. Residues cysteine 220 and cysteine 223 each coordinate Zn(2+). The Glycyl thioester intermediate role is filled by cysteine 244. Zn(2+) is bound by residues cysteine 297 and cysteine 302. A UFM1-interacting sequence (UIS) motif is present at residues 329–341; it reads VVHEDNDWGIELV. Residues 342–372 are linker; the sequence is SEVSEEELKAASGPVPDLPEGIKVAYTIPIT. The UFC1-binding sequence (UFC) motif lies at 382 to 397; it reads DSEQSLDELMAQMKNL.

The protein belongs to the ubiquitin-activating E1 family. UBA5 subfamily. In terms of assembly, homodimer; homodimerization is required for ufm1 activation. Interacts (via UIS motif) with ufm1; binds ufm1 via a trans-binding mechanism in which ufm1 interacts with distinct sites in both subunits of the uba5 homodimer. Interacts (via C-terminus) with ufc1.

The protein localises to the cytoplasm. It is found in the nucleus. It localises to the endoplasmic reticulum membrane. The protein resides in the golgi apparatus. In terms of biological role, E1-like enzyme which specifically catalyzes the first step in ufmylation. Activates ufm1 by first adenylating its C-terminal glycine residue with ATP, and thereafter linking this residue to the side chain of a cysteine residue in E1, yielding a ufm1-E1 thioester and free AMP. Activates ufm1 via a trans-binding mechanism, in which ufm1 interacts with distinct sites in both subunits of the uba5 homodimer. Trans-binding also promotes stabilization of the uba5 homodimer, and enhances ATP-binding. Transfer of ufm1 from uba5 to the E2-like enzyme UFC1 also takes place using a trans mechanism. Ufmylation plays a key role in various processes, such as ribosome recycling, response to DNA damage, interferon response or reticulophagy (also called ER-phagy). The protein is Ubiquitin-like modifier-activating enzyme 5 of Xenopus laevis (African clawed frog).